A 322-amino-acid polypeptide reads, in one-letter code: MKNLYTQLEQDNVPKTLTLLLQSIVGACTEIATRINHGALSDVLGSLPDHNVQGEVQKKLDVIANNILIESLKKNKQVRAVASEEVEDIILCNSFGKYLICFDPLDGSSNTDVNGSLGTIFSITSASAAQTEVSEEDFFSTGRSIIAAGYVLYGPSLMLALSTGSGTHIYTLDPSNNNFMLTHPNLNIPEDTNEFSFNLSNQFKWPENVQKYIVDLQLGTDGIRKKNFNMRWLGAMVGDMHRILCKGGIFGYPEEKNFKYGKLRLLYEANPIAFLVEQANGLASNGTTSILDTVPSSIHQRIPVFIGSKNEVLLIEKYALGK.

Glu-84, Asp-103, Leu-105, and Asp-106 together coordinate Mg(2+). Substrate is bound by residues 106 to 109 (DGSS), Asn-198, and Lys-262. A Mg(2+)-binding site is contributed by Glu-268.

It belongs to the FBPase class 1 family. Homotetramer. Mg(2+) is required as a cofactor.

The protein resides in the cytoplasm. It catalyses the reaction beta-D-fructose 1,6-bisphosphate + H2O = beta-D-fructose 6-phosphate + phosphate. It functions in the pathway carbohydrate biosynthesis; gluconeogenesis. This is Fructose-1,6-bisphosphatase class 1 3 from Pseudoalteromonas translucida (strain TAC 125).